Reading from the N-terminus, the 285-residue chain is Stress response regulator protein 1 (285 aa).

Composition is skewed to low complexity over residues 43 to 58 and 128 to 138; these read DTSSQNDSISTQSSNN and SIISSKSSNKS. 2 disordered regions span residues 43–66 and 114–142; these read DTSSQNDSISTQSSNNDDTHSDQQ and PLTPFDDQTTSPQDSIISSKSSNKSTTVV. Positions 158–276 constitute a Response regulatory domain; that stretch reads SFLIVDDNII…LDFMANSIDD (119 aa). The residue at position 209 (Asp209) is a 4-aspartylphosphate.

In terms of biological role, required for stress adaptation, morphogenesis and virulence. This chain is Stress response regulator protein 1 (SRR1), found in Candida dubliniensis (strain CD36 / ATCC MYA-646 / CBS 7987 / NCPF 3949 / NRRL Y-17841) (Yeast).